The chain runs to 127 residues: uncharacterized protein (127 aa).

The helical transmembrane segment at 12 to 32 (FFFLILFYFCIISSFLFLFIF) threads the bilayer.

Its subcellular location is the membrane. This is an uncharacterized protein from Saccharomyces cerevisiae (strain ATCC 204508 / S288c) (Baker's yeast).